The primary structure comprises 856 residues: MEYNVKDFGAKGDGKTDDTDAIQAAIDAAHKAGGGTVYLPSGEYRVSGGDEASDGALIIKSNVYIVGAGMGETVIKLVDGWDEKLTGIIRSANGEKTHDYGISDLTIDGNQDNTEGEVDGFYTGYIPGKNGADYNVTVERVEIREVSRYAFDPHEQTINLTIRDSVAHDNGKDGFVADFQIGAVFENNVSYNNGRHGFNIVTSSHDIVFTNNVAYGNGANGLVVQRGSEDRDFVYNVEIEGGSFHDNGQEGVLIKMSTDVTLQGAEIYGNGYAGVRVQGVEDVRILDNYIHDNAQSKANAEVIVESYDDRDGPSDDYYETQNVTVKGNTIVGSANSTYGIQERADGTDYTSIGNNSVSGTQRGIVQLSGTNSTFSGRSGDAYQFIDGSTGNDLLTGTPIADLIVGGSGNDTLSGDAGNDVLEGGAGSDRLTGGEGADIFRFTAVSDSYYTASSSVADQILDFDASNDRIDLTGLGFTGLGDGYGGTLAVLANSDGSRTYLRSYEKDADGRYFSLTLDGNFVGRLDDSNLVFRHKTIAGTEGDDSLTGNAMAEILDGGSGNDSLAGGLGNDVLRGGAGDDILNGGLGRDQLSGGEGADIFRFTSVADSYQNSGDNFSDLILDFDPGEDRIDLSGLGFSGLGDGHNGTLLLWTSSETNRTYLKNFDTDADGRRFEIALEGVFSDLSEKQLVFERLVLEGTRLGDQLSGTELNEELLGGAGRDILNGGAGDDILDGGSERDTLTGGSGADVFRFNATLDSFRNYDNGTSRVDDITDFTVGEDLIDLSALGYSGLGNGYDGTLAVLLNADGTKTYLKDRESDADGNHFEIALDGNYADQLSNGDFIFTNLEVIGSSSQAA.

PbH1 repeat units follow at residues 133–155 (DYNVTVERVEIREVSRYAFDPHE), 157–179 (TINLTIRDSVAHDNGKDGFVADF), 180–202 (QIGAVFENNVSYNNGRHGFNIVT), 204–226 (SHDIVFTNNVAYGNGANGLVVQR), 234–256 (VYNVEIEGGSFHDNGQEGVLIKM), 257–279 (STDVTLQGAEIYGNGYAGVRVQG), 280–304 (VEDVRILDNYIHDNAQSKANAEVIV), and 320–342 (TQNVTVKGNTIVGSANSTYGIQE). Hemolysin-type calcium-binding repeat units lie at residues 387 to 402 (GSTGNDLLTGTPIADL), 404 to 421 (VGGSGNDTLSGDAGNDVL), 422 to 439 (EGGAGSDRLTGGEGADIF), 538 to 549 (GTEGDDSLTGNA), 554 to 563 (LDGGSGNDSL), 565 to 581 (GGLGNDVLRGGAGDDIL), 582 to 599 (NGGLGRDQLSGGEGADIF), 715 to 731 (GGAGRDILNGGAGDDIL), and 733 to 749 (GGSERDTLTGGSGADVF).

The protein belongs to the D-mannuronate C5-epimerase family. It depends on Ca(2+) as a cofactor.

The protein localises to the secreted. It carries out the reaction Eliminative cleavage of alginate to give oligosaccharides with 4-deoxy-alpha-L-erythro-hex-4-enuronosyl groups at their non-reducing ends and beta-D-mannuronate at their reducing end.. The catalysed reaction is [(1-&gt;4)-beta-D-mannuronosyl](n) = [alginate](n). The protein operates within glycan biosynthesis; alginate biosynthesis. With respect to regulation, inhibited by zinc. Functionally, converts beta-D-mannuronic acid (M) to alpha-L-guluronic acid (G). Has both epimerase and lyase activities. Contributes to abortive encystment by degrading the coat from inside the cyst. Important for cyst germination. This Azotobacter vinelandii protein is Alginate lyase 7.